Reading from the N-terminus, the 266-residue chain is Short-chain dehydrogenase/reductase AacuF (266 aa).

Positions 13, 57, and 85 each coordinate NADP(+). Active-site proton donor residues include serine 145 and tyrosine 164. NADP(+)-binding residues include tyrosine 164, lysine 168, and valine 198. The active-site Lowers pKa of active site Tyr is lysine 168.

It belongs to the short-chain dehydrogenases/reductases (SDR) family.

The protein operates within secondary metabolite biosynthesis. In terms of biological role, short-chain dehydrogenase/reductase; part of the gene cluster that mediates the biosynthesis of the tetrahydroxanthone dimer secalonic acid D. The pathway begins with the synthesis of atrochrysone thioester by the polyketide synthase AacuL. The atrochrysone carboxyl ACP thioesterase AacuM then breaks the thioester bond and releases the atrochrysone carboxylic acid from AacuL. Atrochrysone carboxylic acid is decarboxylated by the decarboxylase AacuI, and oxidized by the anthrone oxygenase AacuG to yield emodin. Emodin is then reduced to emodin hydroquinone by a yet unidentified oxidoreductase. A-ring reduction by the short chain dehydrogenase AacuN, dehydration by the scytalone dehydratase-like protein AacuK and probable spontaneous re-oxidation, results in overall deoxygenation to chrysophanol. Baeyer-Villiger oxidation by the Baeyer-Villiger monooxygenase (BVMO) AacuH then yields monodictyphenone. Monodictyphenone is transformed into compounds with the tetrahydroxanthone skeleton via methylesterification by the methyltransferase AacuQ, followed by the action of the flavin-dependent monooxygenase AacuC, the isomerase AacuP, and the short chain dehydrogenase/reductase AacuF or AacuD. AacuF and AacuD should accept the same compound as a substrate but perform the ketoreduction with a different stereoselectivity, thus yielding blennolides B and A, respectively. In the final step of the biosynthesis, the cytochrome P450 monooxygenase AacuE accepts blennolide B and/or blennolide A to conduct the dimerization reaction to furnish the tetrahydroxanthone dimers, secalonic acids D, B, and F. This Aspergillus aculeatus (strain ATCC 16872 / CBS 172.66 / WB 5094) protein is Short-chain dehydrogenase/reductase AacuF.